Consider the following 101-residue polypeptide: Guanyl-specific ribonuclease St (101 aa).

Cys4 and Cys54 are joined by a disulfide. Glu61 functions as the Proton acceptor in the catalytic mechanism. The active-site Proton donor is the His91.

Belongs to the ribonuclease N1/T1 family.

It catalyses the reaction [RNA] containing guanosine + H2O = an [RNA fragment]-3'-guanosine-3'-phosphate + a 5'-hydroxy-ribonucleotide-3'-[RNA fragment].. The chain is Guanyl-specific ribonuclease St from Saccharopolyspora erythraea (Streptomyces erythraeus).